The primary structure comprises 1118 residues: Cytospin-A (1118 aa).

4 disordered regions span residues 1 to 50 (MKKA…AALS), 75 to 175 (KKSN…DNQI), 294 to 324 (SLSPEITPGNQSDGGGTLTSSVEGSAPGSVE), and 359 to 391 (SSDDALDAPSSSESEGVPSIERSRKGSSGNASE). Composition is skewed to low complexity over residues 34 to 48 (APTGGKPVKPGAAAA), 80 to 90 (SSAAPSAPAPA), and 99 to 113 (KSSTGTSSSAKRSTS). Over residues 120-131 (SSTRERLRERTR) the composition is skewed to basic and acidic residues. Positions 133 to 145 (NQSKKLPSVSQGA) are enriched in polar residues. Basic and acidic residues predominate over residues 158–171 (TATEGDIRMSKSKS). The stretch at 168–281 (KSKSDNQISD…LNALGFSLEQ (114 aa)) forms a coiled coil. Residues 294 to 304 (SLSPEITPGNQ) show a composition bias toward polar residues. Low complexity predominate over residues 359 to 373 (SSDDALDAPSSSESE). Phosphoserine occurs at positions 385, 386, and 390. Coiled-coil stretches lie at residues 395–450 (ACLT…MESL) and 488–808 (RYME…RGRV). A phosphoserine mark is found at S869, S882, and S888. A disordered region spans residues 916-999 (EHLLRTSSTS…STRSRIREER (84 aa)). Positions 947 to 957 (RSSEEMKRDIS) are enriched in basic and acidic residues. The segment covering 972–992 (TTSPQLSLSSSPTASVTPSTR) has biased composition (low complexity). The 106-residue stretch at 1012-1117 (GSKRNALLKW…YVTAIYKYFE (106 aa)) folds into the Calponin-homology (CH) domain.

This sequence belongs to the cytospin-A family. As to quaternary structure, may interact with both microtubules and actin cytoskeleton.

It is found in the cytoplasm. It localises to the cytoskeleton. The protein resides in the spindle. Its subcellular location is the cell junction. The protein localises to the gap junction. Involved in cytokinesis and spindle organization. May play a role in actin cytoskeleton organization and microtubule stabilization and hence required for proper cell adhesion and migration. The protein is Cytospin-A (Specc1l) of Rattus norvegicus (Rat).